The primary structure comprises 837 residues: CoA-transferase/lyase DddD (837 aa).

The active-site Nucleophile is the aspartate 602.

This sequence belongs to the CoA-transferase III family.

Its function is as follows. Dimethyl sulfide (DMS)-producing enzyme. Acts both as a transferase and a lyase: uses acetyl-coenzyme A (acetyl-coA) and dimethylsulfoniopropionate (DMSP) as substrates to produce DMS, acetate and 3-hydroxypropionate-CoA (3HP-CoA). Mediates the CoA-transferase prior to lyase activity. DMS is the principal form by which sulfur is transported from oceans to the atmosphere and is a key component of the ocean sulfur cycle. This chain is CoA-transferase/lyase DddD, found in Marinomonas sp. (strain MWYL1).